The chain runs to 268 residues: Thymidylate synthase (268 aa).

A dUMP-binding site is contributed by Arg-27. Position 57 (His-57) interacts with (6R)-5,10-methylene-5,6,7,8-tetrahydrofolate. 132–133 contacts dUMP; it reads RR. Cys-152 acts as the Nucleophile in catalysis. Residues 172–175, Asn-183, and 213–215 each bind dUMP; these read RSAD and HVY. Asp-175 provides a ligand contact to (6R)-5,10-methylene-5,6,7,8-tetrahydrofolate. Ala-267 serves as a coordination point for (6R)-5,10-methylene-5,6,7,8-tetrahydrofolate.

Belongs to the thymidylate synthase family. Bacterial-type ThyA subfamily. Homodimer.

Its subcellular location is the cytoplasm. The enzyme catalyses dUMP + (6R)-5,10-methylene-5,6,7,8-tetrahydrofolate = 7,8-dihydrofolate + dTMP. It functions in the pathway pyrimidine metabolism; dTTP biosynthesis. Its function is as follows. Catalyzes the reductive methylation of 2'-deoxyuridine-5'-monophosphate (dUMP) to 2'-deoxythymidine-5'-monophosphate (dTMP) while utilizing 5,10-methylenetetrahydrofolate (mTHF) as the methyl donor and reductant in the reaction, yielding dihydrofolate (DHF) as a by-product. This enzymatic reaction provides an intracellular de novo source of dTMP, an essential precursor for DNA biosynthesis. The protein is Thymidylate synthase of Kineococcus radiotolerans (strain ATCC BAA-149 / DSM 14245 / SRS30216).